We begin with the raw amino-acid sequence, 1856 residues long: Autophagy-related protein 2 (1856 aa).

Disordered regions lie at residues 123–167 (NTND…TGNK), 229–283 (LRTL…GNES), 309–328 (KSAA…DKED), 395–428 (TKSR…DASH), 1157–1177 (LNGT…SSLM), 1614–1647 (MLGG…VEVA), and 1719–1741 (KLQP…EDED). Positions 137-147 (ASEDDDEDDID) are enriched in acidic residues. Positions 250-262 (KKQQGSDNDSPTD) are enriched in polar residues. Residues 270-280 (NDNDDDDDDYG) show a composition bias toward acidic residues. Residues 412–424 (DNDEIPEDQSESD) are compositionally biased toward acidic residues. A compositionally biased stretch (low complexity) spans 1157-1170 (LNGTENGSTSESSS). The segment covering 1621–1639 (SVRSPNLGGSDNRRNSNAS) has biased composition (polar residues). Residues 1732–1741 (TEEEEDEDED) are compositionally biased toward acidic residues.

It belongs to the ATG2 family.

The protein localises to the preautophagosomal structure membrane. The protein resides in the endoplasmic reticulum membrane. The enzyme catalyses a 1,2-diacyl-sn-glycero-3-phosphocholine(in) = a 1,2-diacyl-sn-glycero-3-phosphocholine(out). The catalysed reaction is a 1,2-diacyl-sn-glycero-3-phospho-L-serine(in) = a 1,2-diacyl-sn-glycero-3-phospho-L-serine(out). It carries out the reaction a 1,2-diacyl-sn-glycero-3-phosphoethanolamine(in) = a 1,2-diacyl-sn-glycero-3-phosphoethanolamine(out). In terms of biological role, lipid transfer protein required for autophagosome completion and peroxisome degradation. Tethers the edge of the isolation membrane (IM) to the endoplasmic reticulum (ER) and mediates direct lipid transfer from ER to IM for IM expansion. ATG2/SPO72 binds to the ER exit site (ERES), which is the membrane source for autophagosome formation, using basic residues in its N-terminal region (NR) and to the expanding edge of the IM through its C-terminal region. The latter binding is assisted by an ATG18-PtdIns3P interaction. ATG2/SPO72 then extracts phospholipids from the membrane source using its NR and transfers them to ATG9 to the IM through its predicted beta-sheet-rich structure for membrane expansion. This chain is Autophagy-related protein 2 (SPO72), found in Candida albicans (strain SC5314 / ATCC MYA-2876) (Yeast).